A 1507-amino-acid polypeptide reads, in one-letter code: Chromatin-remodeling ATPase INO80 (1507 aa).

2 disordered regions span residues 30–82 (PEDE…DAED) and 428–452 (RKKQEKEAAEAFKREQEQRESKRQQ). Over residues 38–67 (GSSSQDESRSTQGGVVANYSNGSKSRMNAS) the composition is skewed to polar residues. The DBINO domain occupies 350–475 (AWINIVRRDI…SHFMQNKTDS (126 aa)). A compositionally biased stretch (basic and acidic residues) spans 428 to 450 (RKKQEKEAAEAFKREQEQRESKR). Residues 598–769 (VNCYEQGLNG…WALLHFIMPM (172 aa)) form the Helicase ATP-binding domain. Position 611–618 (611–618 (DEMGLGKT)) interacts with ATP. The Helicase C-terminal domain occupies 1210-1360 (TLDILLKRLR…QLVMTGGHVQ (151 aa)). The segment at 1415-1507 (LEELEDVDRQ…KGFDPSSSAN (93 aa)) is disordered. The segment covering 1491–1507 (ASVTESNKGFDPSSSAN) has biased composition (polar residues).

Belongs to the SNF2/RAD54 helicase family. Component of the INO80 chromatin-remodeling complex. Associates with REF6/EIN6.

It is found in the nucleus. It catalyses the reaction ATP + H2O = ADP + phosphate + H(+). ATPase component of the chromatin remodeling INO80 complex which is involved in transcriptional regulation, DNA replication and DNA repair. Binds DNA. As part of the INO80 complex, remodels chromatin by shifting nucleosomes. The INO80 complex controls ethylene-induced H2A.Z eviction dynamics. Positive regulator of homologous recombination, but not an essential component of homologous recombination. Not involved in the illegitimate repair pathway. This Arabidopsis thaliana (Mouse-ear cress) protein is Chromatin-remodeling ATPase INO80.